The sequence spans 51 residues: Large ribosomal subunit protein bL33 (51 aa).

This sequence belongs to the bacterial ribosomal protein bL33 family.

In Psychrobacter arcticus (strain DSM 17307 / VKM B-2377 / 273-4), this protein is Large ribosomal subunit protein bL33.